The chain runs to 212 residues: Deoxyribose-phosphate aldolase (212 aa).

Aspartate 89 functions as the Proton donor/acceptor in the catalytic mechanism. The active-site Schiff-base intermediate with acetaldehyde is the lysine 151. The active-site Proton donor/acceptor is the lysine 180.

It belongs to the DeoC/FbaB aldolase family. DeoC type 1 subfamily.

The protein resides in the cytoplasm. The catalysed reaction is 2-deoxy-D-ribose 5-phosphate = D-glyceraldehyde 3-phosphate + acetaldehyde. The protein operates within carbohydrate degradation; 2-deoxy-D-ribose 1-phosphate degradation; D-glyceraldehyde 3-phosphate and acetaldehyde from 2-deoxy-alpha-D-ribose 1-phosphate: step 2/2. Functionally, catalyzes a reversible aldol reaction between acetaldehyde and D-glyceraldehyde 3-phosphate to generate 2-deoxy-D-ribose 5-phosphate. This chain is Deoxyribose-phosphate aldolase, found in Clostridium botulinum (strain Okra / Type B1).